A 262-amino-acid polypeptide reads, in one-letter code: Acyl-[acyl-carrier-protein]--UDP-N-acetylglucosamine O-acyltransferase (262 aa).

This sequence belongs to the transferase hexapeptide repeat family. LpxA subfamily. As to quaternary structure, homotrimer.

It is found in the cytoplasm. The catalysed reaction is a (3R)-hydroxyacyl-[ACP] + UDP-N-acetyl-alpha-D-glucosamine = a UDP-3-O-[(3R)-3-hydroxyacyl]-N-acetyl-alpha-D-glucosamine + holo-[ACP]. It functions in the pathway glycolipid biosynthesis; lipid IV(A) biosynthesis; lipid IV(A) from (3R)-3-hydroxytetradecanoyl-[acyl-carrier-protein] and UDP-N-acetyl-alpha-D-glucosamine: step 1/6. In terms of biological role, involved in the biosynthesis of lipid A, a phosphorylated glycolipid that anchors the lipopolysaccharide to the outer membrane of the cell. This Vibrio cholerae serotype O1 (strain ATCC 39541 / Classical Ogawa 395 / O395) protein is Acyl-[acyl-carrier-protein]--UDP-N-acetylglucosamine O-acyltransferase.